The following is a 144-amino-acid chain: MKSFMASPATIERKWYVVDATGHTLGRLSSEIAKVLRGKNKAIYTPHIDTGDYVIVVNADKIKVTGKKMDQKIYFSHSDYPGGVRETTLKEMLAKKPEDVITLAVKGMLPKGPLGRSMLNKLHVYAGPEHNNAAQKPEVLEIKY.

It belongs to the universal ribosomal protein uL13 family. As to quaternary structure, part of the 50S ribosomal subunit.

In terms of biological role, this protein is one of the early assembly proteins of the 50S ribosomal subunit, although it is not seen to bind rRNA by itself. It is important during the early stages of 50S assembly. In Lachnoclostridium phytofermentans (strain ATCC 700394 / DSM 18823 / ISDg) (Clostridium phytofermentans), this protein is Large ribosomal subunit protein uL13.